Here is an 888-residue protein sequence, read N- to C-terminus: Alanine--tRNA ligase (888 aa).

Residues His573, His577, Cys676, and His680 each coordinate Zn(2+).

This sequence belongs to the class-II aminoacyl-tRNA synthetase family. Requires Zn(2+) as cofactor.

The protein localises to the cytoplasm. The catalysed reaction is tRNA(Ala) + L-alanine + ATP = L-alanyl-tRNA(Ala) + AMP + diphosphate. Its function is as follows. Catalyzes the attachment of alanine to tRNA(Ala) in a two-step reaction: alanine is first activated by ATP to form Ala-AMP and then transferred to the acceptor end of tRNA(Ala). Also edits incorrectly charged Ser-tRNA(Ala) and Gly-tRNA(Ala) via its editing domain. This Corynebacterium glutamicum (strain ATCC 13032 / DSM 20300 / JCM 1318 / BCRC 11384 / CCUG 27702 / LMG 3730 / NBRC 12168 / NCIMB 10025 / NRRL B-2784 / 534) protein is Alanine--tRNA ligase.